A 566-amino-acid polypeptide reads, in one-letter code: Pentatricopeptide repeat-containing protein At4g11690 (566 aa).

13 PPR repeats span residues 93 to 127 (KFRL…GFVP), 128 to 158 (GSNC…NKSK), 162 to 196 (DVYS…GFSP), 197 to 231 (NVVI…GLVA), 232 to 266 (NERT…GVFP), 267 to 301 (NLYT…GVSC), 302 to 336 (NIVT…GINP), 337 to 371 (NLIT…GLSP), 372 to 406 (SLVT…GIKP), 407 to 441 (SKVT…GLVP), 442 to 476 (DVHT…NCEP), 477 to 511 (NEVI…ELAP), and 512 to 546 (NVAS…GIDP).

Belongs to the PPR family. P subfamily.

The sequence is that of Pentatricopeptide repeat-containing protein At4g11690 from Arabidopsis thaliana (Mouse-ear cress).